The primary structure comprises 102 residues: Large ribosomal subunit protein bL28 (102 aa).

The segment at 1 to 20 (MSRRCELTAKGPQVGHKVSH) is disordered.

Belongs to the bacterial ribosomal protein bL28 family.

The protein is Large ribosomal subunit protein bL28 of Bradyrhizobium sp. (strain BTAi1 / ATCC BAA-1182).